A 72-amino-acid polypeptide reads, in one-letter code: Translation initiation factor IF-1 (72 aa).

The 72-residue stretch at 1 to 72 folds into the S1-like domain; sequence MTKEEAIEVD…SRGRIMFRER (72 aa).

It belongs to the IF-1 family. In terms of assembly, component of the 30S ribosomal translation pre-initiation complex which assembles on the 30S ribosome in the order IF-2 and IF-3, IF-1 and N-formylmethionyl-tRNA(fMet); mRNA recruitment can occur at any time during PIC assembly.

It localises to the cytoplasm. One of the essential components for the initiation of protein synthesis. Stabilizes the binding of IF-2 and IF-3 on the 30S subunit to which N-formylmethionyl-tRNA(fMet) subsequently binds. Helps modulate mRNA selection, yielding the 30S pre-initiation complex (PIC). Upon addition of the 50S ribosomal subunit IF-1, IF-2 and IF-3 are released leaving the mature 70S translation initiation complex. This chain is Translation initiation factor IF-1, found in Treponema pallidum (strain Nichols).